The chain runs to 268 residues: Receptor expression-enhancing protein 2 (268 aa).

Transmembrane regions (helical) follow at residues 1-21 (MVSWIISRMVVLAFGTLYPAY) and 35-55 (YVKWMMYWIVFALFTTAETIT). The tract at residues 170–268 (GDDTHTAATL…TTANNVAESP (99 aa)) is disordered. Residues 180–196 (PRAKTATRTVRATPVPA) are compositionally biased toward low complexity. The span at 199-216 (ESQHSSRSDDQSDSRTEH) shows a compositional bias: basic and acidic residues. The segment covering 228–248 (RIAITRAAKKPAAAKTEQTTK) has biased composition (low complexity). The segment covering 249 to 258 (TVKKAPKKKP) has biased composition (basic residues).

The protein belongs to the DP1 family. As to quaternary structure, interacts with odorant receptor proteins.

It is found in the membrane. In terms of biological role, may enhance the cell surface expression of odorant receptors. This is Receptor expression-enhancing protein 2 (reep2) from Danio rerio (Zebrafish).